The following is a 79-amino-acid chain: Defensin 2 (79 aa).

Positions Val-1–Gly-32 are cleaved as a signal peptide. 3 disulfide bridges follow: Cys-35–Cys-79, Cys-46–Cys-67, and Cys-52–Cys-73.

It belongs to the DEFL family. In terms of assembly, may form dimers. In terms of processing, not glycosylated. Post-translationally, has 4 disulfide bonds.

Functionally, probably has antifungal activity. This Arachis hypogaea (Peanut) protein is Defensin 2.